Consider the following 493-residue polypeptide: Hexokinase (493 aa).

The Hexokinase domain maps to 27-481 (EELSWRINKF…SGKGAAITAA (455 aa)). A hexokinase small subdomain region spans residues 91-239 (TGQEKGTYYA…AIPAKVCCVL (149 aa)). Residue 102 to 107 (DFGGTN) participates in ATP binding. The tract at residues 177-203 (SVGFTFSFPCTSPSINCSILIDWTKGF) is glucose-binding. Residues 240–470 (NDAVGTLMSC…ENLIIIPADD (231 aa)) form a hexokinase large subdomain region.

It belongs to the hexokinase family.

It carries out the reaction a D-hexose + ATP = a D-hexose 6-phosphate + ADP + H(+). The enzyme catalyses D-mannose + ATP = D-mannose 6-phosphate + ADP + H(+). The catalysed reaction is D-fructose + ATP = D-fructose 6-phosphate + ADP + H(+). It catalyses the reaction D-glucose + ATP = D-glucose 6-phosphate + ADP + H(+). It participates in carbohydrate metabolism; hexose metabolism. Its pathway is carbohydrate degradation; glycolysis; D-glyceraldehyde 3-phosphate and glycerone phosphate from D-glucose: step 1/4. Functionally, catalyzes the phosphorylation of various hexoses to hexose 6-phosphate. In Plasmodium falciparum, this protein is Hexokinase (HK).